The chain runs to 159 residues: Ribosomal RNA large subunit methyltransferase H (159 aa).

Residues Leu-76, Gly-108, and 127–132 (FGLLTL) contribute to the S-adenosyl-L-methionine site.

It belongs to the RNA methyltransferase RlmH family. Homodimer.

Its subcellular location is the cytoplasm. The catalysed reaction is pseudouridine(1915) in 23S rRNA + S-adenosyl-L-methionine = N(3)-methylpseudouridine(1915) in 23S rRNA + S-adenosyl-L-homocysteine + H(+). Specifically methylates the pseudouridine at position 1915 (m3Psi1915) in 23S rRNA. The protein is Ribosomal RNA large subunit methyltransferase H of Streptococcus equi subsp. zooepidemicus (strain MGCS10565).